The primary structure comprises 396 residues: Elongation factor Tu (396 aa).

The 197-residue stretch at 10-206 (KPHVNIGTIG…AVDNYIPEPE (197 aa)) folds into the tr-type G domain. The segment at 19–26 (GHVDHGKT) is G1. Residue 19-26 (GHVDHGKT) coordinates GTP. Thr26 provides a ligand contact to Mg(2+). The segment at 60-64 (GITIA) is G2. The segment at 81-84 (DCPG) is G3. GTP contacts are provided by residues 81-85 (DCPGH) and 136-139 (NKAD). The segment at 136–139 (NKAD) is G4. The segment at 174–176 (SAL) is G5.

This sequence belongs to the TRAFAC class translation factor GTPase superfamily. Classic translation factor GTPase family. EF-Tu/EF-1A subfamily. As to quaternary structure, monomer.

It is found in the cytoplasm. It catalyses the reaction GTP + H2O = GDP + phosphate + H(+). Functionally, GTP hydrolase that promotes the GTP-dependent binding of aminoacyl-tRNA to the A-site of ribosomes during protein biosynthesis. The chain is Elongation factor Tu from Geobacter sulfurreducens (strain ATCC 51573 / DSM 12127 / PCA).